Consider the following 285-residue polypeptide: Hydroxyacylglutathione hydrolase, mitochondrial (285 aa).

The transit peptide at 1 to 10 (MKFLLQQIRN) directs the protein to the mitochondrion. Zn(2+) is bound by residues H69, H71, D73, H74, H131, D154, and H198.

Requires Zn(2+) as cofactor.

It localises to the mitochondrion matrix. It catalyses the reaction an S-(2-hydroxyacyl)glutathione + H2O = a 2-hydroxy carboxylate + glutathione + H(+). It carries out the reaction (R)-S-lactoylglutathione + H2O = (R)-lactate + glutathione + H(+). It participates in secondary metabolite metabolism; methylglyoxal degradation; (R)-lactate from methylglyoxal: step 2/2. With respect to regulation, inhibited by various thiol compounds such as glutathione and coenzyme A. In terms of biological role, thiolesterase that catalyzes the hydrolysis of S-D-lactoylglutathione to form glutathione and D-lactic acid. Involved in the metabolism of methylglyoxal, a toxic compound for yeast proliferation, by converting methylglyoxal to lactate via S-D-lactoylglutathione by sequential enzyme reactions catalyzed by glyoxalase I and glyoxalase II. The polypeptide is Hydroxyacylglutathione hydrolase, mitochondrial (Saccharomyces cerevisiae (strain ATCC 204508 / S288c) (Baker's yeast)).